The sequence spans 528 residues: Peptide chain release factor 3 (528 aa).

The region spanning aspartate 10–arginine 278 is the tr-type G domain. Residues serine 19–threonine 26, aspartate 87–histidine 91, and asparagine 141–aspartate 144 contribute to the GTP site.

Belongs to the TRAFAC class translation factor GTPase superfamily. Classic translation factor GTPase family. PrfC subfamily.

The protein localises to the cytoplasm. Functionally, increases the formation of ribosomal termination complexes and stimulates activities of RF-1 and RF-2. It binds guanine nucleotides and has strong preference for UGA stop codons. It may interact directly with the ribosome. The stimulation of RF-1 and RF-2 is significantly reduced by GTP and GDP, but not by GMP. The sequence is that of Peptide chain release factor 3 from Syntrophotalea carbinolica (strain DSM 2380 / NBRC 103641 / GraBd1) (Pelobacter carbinolicus).